The primary structure comprises 331 residues: Holliday junction branch migration complex subunit RuvB (331 aa).

Residues 1–171 form a large ATPase domain (RuvB-L) region; the sequence is MTEPLDAALR…FGIIEHLEYY (171 aa). ATP-binding positions include leucine 9, arginine 10, glycine 51, lysine 54, threonine 55, threonine 56, 118-120, arginine 161, tyrosine 171, and arginine 208; that span reads EDF. Threonine 55 contacts Mg(2+). Residues 172–242 form a small ATPAse domain (RuvB-S) region; sequence TPEEIGTNLL…RAQDALDKLG (71 aa). The interval 245 to 331 is head domain (RuvB-H); that stretch reads TAGLDERDKK…AESDLGLYTN (87 aa). DNA-binding residues include arginine 300 and arginine 305.

This sequence belongs to the RuvB family. In terms of assembly, homohexamer. Forms an RuvA(8)-RuvB(12)-Holliday junction (HJ) complex. HJ DNA is sandwiched between 2 RuvA tetramers; dsDNA enters through RuvA and exits via RuvB. An RuvB hexamer assembles on each DNA strand where it exits the tetramer. Each RuvB hexamer is contacted by two RuvA subunits (via domain III) on 2 adjacent RuvB subunits; this complex drives branch migration. In the full resolvosome a probable DNA-RuvA(4)-RuvB(12)-RuvC(2) complex forms which resolves the HJ.

The protein localises to the cytoplasm. The catalysed reaction is ATP + H2O = ADP + phosphate + H(+). The RuvA-RuvB-RuvC complex processes Holliday junction (HJ) DNA during genetic recombination and DNA repair, while the RuvA-RuvB complex plays an important role in the rescue of blocked DNA replication forks via replication fork reversal (RFR). RuvA specifically binds to HJ cruciform DNA, conferring on it an open structure. The RuvB hexamer acts as an ATP-dependent pump, pulling dsDNA into and through the RuvAB complex. RuvB forms 2 homohexamers on either side of HJ DNA bound by 1 or 2 RuvA tetramers; 4 subunits per hexamer contact DNA at a time. Coordinated motions by a converter formed by DNA-disengaged RuvB subunits stimulates ATP hydrolysis and nucleotide exchange. Immobilization of the converter enables RuvB to convert the ATP-contained energy into a lever motion, pulling 2 nucleotides of DNA out of the RuvA tetramer per ATP hydrolyzed, thus driving DNA branch migration. The RuvB motors rotate together with the DNA substrate, which together with the progressing nucleotide cycle form the mechanistic basis for DNA recombination by continuous HJ branch migration. Branch migration allows RuvC to scan DNA until it finds its consensus sequence, where it cleaves and resolves cruciform DNA. The sequence is that of Holliday junction branch migration complex subunit RuvB from Deinococcus geothermalis (strain DSM 11300 / CIP 105573 / AG-3a).